We begin with the raw amino-acid sequence, 392 residues long: MTVLPKTLLLLGSGELGKEITIAAQRLGCHVIACDRYSGAPAMQVADQAEVLDMNNSEALTAIIRHHQPDVVIPEIEALAVNALAELENEGITVIPTARATAVTMNRDRIRDLASEELALLTPKFAYAGSAEELRHAAEPLGWPVVVKPVMSSSGKGQSVVSNPEGLRQAWQAAMAGSRGNSPRVIVEEFLHFDLEITLLTIRQEDGSTLFCEPIGHEQIGGDYQCSWQPAELSTEQLKQAQSMALSITENLGGVGLFGVEFFLCGNEVIFSELSPRPHDTGLVTLISQNLSEFELHLRAVLKLPIPTIQTADAAASRVILAKDNLSSISYKGVEKALSEIDTQILLFGKPNARPRRRMGVALAKGKSLEAVRSKADRAAASIQVIKGKGVT.

N(1)-(5-phospho-beta-D-ribosyl)glycinamide is bound by residues 15–16 and glutamate 75; that span reads EL. Residues arginine 107, lysine 148, 153 to 158, 188 to 191, and glutamate 196 each bind ATP; these read SSGKGQ and EEFL. Residues 112–302 form the ATP-grasp domain; that stretch reads DLASEELALL…EFELHLRAVL (191 aa). Glutamate 261 and glutamate 273 together coordinate Mg(2+). N(1)-(5-phospho-beta-D-ribosyl)glycinamide is bound by residues aspartate 280, lysine 350, and 357-358; that span reads RR.

Belongs to the PurK/PurT family. As to quaternary structure, homodimer.

It catalyses the reaction N(1)-(5-phospho-beta-D-ribosyl)glycinamide + formate + ATP = N(2)-formyl-N(1)-(5-phospho-beta-D-ribosyl)glycinamide + ADP + phosphate + H(+). It functions in the pathway purine metabolism; IMP biosynthesis via de novo pathway; N(2)-formyl-N(1)-(5-phospho-D-ribosyl)glycinamide from N(1)-(5-phospho-D-ribosyl)glycinamide (formate route): step 1/1. In terms of biological role, involved in the de novo purine biosynthesis. Catalyzes the transfer of formate to 5-phospho-ribosyl-glycinamide (GAR), producing 5-phospho-ribosyl-N-formylglycinamide (FGAR). Formate is provided by PurU via hydrolysis of 10-formyl-tetrahydrofolate. This chain is Formate-dependent phosphoribosylglycinamide formyltransferase, found in Prochlorococcus marinus (strain MIT 9303).